The primary structure comprises 227 residues: PKHD-type hydroxylase Swit_4046 (227 aa).

The Fe2OG dioxygenase domain maps to 78–178 (KVFPPLFNLY…RLCSFFWIQS (101 aa)). The Fe cation site is built by His-96, Asp-98, and His-159. Arg-169 provides a ligand contact to 2-oxoglutarate.

It depends on Fe(2+) as a cofactor. L-ascorbate serves as cofactor.

In Rhizorhabdus wittichii (strain DSM 6014 / CCUG 31198 / JCM 15750 / NBRC 105917 / EY 4224 / RW1) (Sphingomonas wittichii), this protein is PKHD-type hydroxylase Swit_4046.